We begin with the raw amino-acid sequence, 306 residues long: Aspartate carbamoyltransferase catalytic subunit (306 aa).

Arginine 51 and threonine 52 together coordinate carbamoyl phosphate. Position 80 (lysine 80) interacts with L-aspartate. Residues arginine 101, histidine 129, and glutamine 132 each contribute to the carbamoyl phosphate site. Residues arginine 162 and arginine 224 each contribute to the L-aspartate site. Carbamoyl phosphate-binding residues include leucine 263 and proline 264.

It belongs to the aspartate/ornithine carbamoyltransferase superfamily. ATCase family. As to quaternary structure, heterododecamer (2C3:3R2) of six catalytic PyrB chains organized as two trimers (C3), and six regulatory PyrI chains organized as three dimers (R2).

It carries out the reaction carbamoyl phosphate + L-aspartate = N-carbamoyl-L-aspartate + phosphate + H(+). Its pathway is pyrimidine metabolism; UMP biosynthesis via de novo pathway; (S)-dihydroorotate from bicarbonate: step 2/3. Catalyzes the condensation of carbamoyl phosphate and aspartate to form carbamoyl aspartate and inorganic phosphate, the committed step in the de novo pyrimidine nucleotide biosynthesis pathway. The chain is Aspartate carbamoyltransferase catalytic subunit from Parabacteroides distasonis (strain ATCC 8503 / DSM 20701 / CIP 104284 / JCM 5825 / NCTC 11152).